The chain runs to 226 residues: UPF0758 protein GK2618 (226 aa).

In terms of domain architecture, MPN spans 104–226 (VIRCPEDGAK…FISLKEKGYV (123 aa)). Zn(2+)-binding residues include His-175, His-177, and Asp-188. Positions 175–188 (HNHPSGDPTPSRED) match the JAMM motif motif.

This sequence belongs to the UPF0758 family.

The chain is UPF0758 protein GK2618 from Geobacillus kaustophilus (strain HTA426).